The chain runs to 612 residues: Threonine--tRNA ligase (612 aa).

The interval 218 to 509 (DHRKLGVELG…LSEHFGGNFP (292 aa)) is catalytic. The Zn(2+) site is built by cysteine 310, histidine 361, and histidine 486.

Belongs to the class-II aminoacyl-tRNA synthetase family. Homodimer. The cofactor is Zn(2+).

Its subcellular location is the cytoplasm. It catalyses the reaction tRNA(Thr) + L-threonine + ATP = L-threonyl-tRNA(Thr) + AMP + diphosphate + H(+). Functionally, catalyzes the attachment of threonine to tRNA(Thr) in a two-step reaction: L-threonine is first activated by ATP to form Thr-AMP and then transferred to the acceptor end of tRNA(Thr). Also edits incorrectly charged L-seryl-tRNA(Thr). The polypeptide is Threonine--tRNA ligase (Helicobacter pylori (strain HPAG1)).